The chain runs to 266 residues: NADH dehydrogenase [ubiquinone] iron-sulfur protein 3, mitochondrial (266 aa).

A mitochondrion-targeting transit peptide spans 1–38 (MAAAVAAAARGCWQRLVGSAAPARVAGRPSVLLLPVRR).

This sequence belongs to the complex I 30 kDa subunit family. In terms of assembly, core subunit of respiratory chain NADH dehydrogenase (Complex I) which is composed of 45 different subunits. Interacts with NDUFAF3. Interacts with RAB5IF. Found in subcomplexes containing subunits NDUFS2, MT-ND1 and NDUFA13.

It localises to the mitochondrion inner membrane. It carries out the reaction a ubiquinone + NADH + 5 H(+)(in) = a ubiquinol + NAD(+) + 4 H(+)(out). Functionally, core subunit of the mitochondrial membrane respiratory chain NADH dehydrogenase (Complex I) which catalyzes electron transfer from NADH through the respiratory chain, using ubiquinone as an electron acceptor. Essential for the catalytic activity and assembly of complex I. This chain is NADH dehydrogenase [ubiquinone] iron-sulfur protein 3, mitochondrial (NDUFS3), found in Bos taurus (Bovine).